A 278-amino-acid polypeptide reads, in one-letter code: Digeranylgeranylglyceryl phosphate synthase (278 aa).

Helical transmembrane passes span 12-32 (LKNCLTASFGAFIGGLIASYF), 34-54 (ISMIDNLILASIVVFLVCGFG), 91-111 (LLVVMGLIISMFNITCFLMAV), 142-162 (VFIFGGIAVGNIDVTIMLFLC), 204-224 (FLLVFAVLLSPLPYLFGFFGI), 226-246 (YLISVIFCDLLFLIGIYNLVM), and 257-277 (SRNIKIVTNLVLIAFLIGSLF).

It belongs to the UbiA prenyltransferase family. DGGGP synthase subfamily. Requires Mg(2+) as cofactor.

Its subcellular location is the cell membrane. The catalysed reaction is sn-3-O-(geranylgeranyl)glycerol 1-phosphate + (2E,6E,10E)-geranylgeranyl diphosphate = 2,3-bis-O-(geranylgeranyl)-sn-glycerol 1-phosphate + diphosphate. It functions in the pathway membrane lipid metabolism; glycerophospholipid metabolism. Prenyltransferase that catalyzes the transfer of the geranylgeranyl moiety of geranylgeranyl diphosphate (GGPP) to the C2 hydroxyl of (S)-3-O-geranylgeranylglyceryl phosphate (GGGP). This reaction is the second ether-bond-formation step in the biosynthesis of archaeal membrane lipids. The sequence is that of Digeranylgeranylglyceryl phosphate synthase from Methanococcus maripaludis (strain C6 / ATCC BAA-1332).